A 62-amino-acid chain; its full sequence is uncharacterized protein (62 aa).

A helical membrane pass occupies residues 37–57 (FILGVILLGVIIESITLLVVY).

The protein resides in the membrane. This is an uncharacterized protein from Dictyostelium discoideum (Social amoeba).